Reading from the N-terminus, the 270-residue chain is 4-hydroxy-tetrahydrodipicolinate reductase (270 aa).

Residues 8-13 (GALGRM), Asp-34, 102-104 (GTT), and 128-131 (SQNY) contribute to the NAD(+) site. Residue His-160 is the Proton donor/acceptor of the active site. His-161 is a (S)-2,3,4,5-tetrahydrodipicolinate binding site. Lys-164 (proton donor) is an active-site residue. Position 170–171 (170–171 (GT)) interacts with (S)-2,3,4,5-tetrahydrodipicolinate.

It belongs to the DapB family.

Its subcellular location is the cytoplasm. It carries out the reaction (S)-2,3,4,5-tetrahydrodipicolinate + NAD(+) + H2O = (2S,4S)-4-hydroxy-2,3,4,5-tetrahydrodipicolinate + NADH + H(+). It catalyses the reaction (S)-2,3,4,5-tetrahydrodipicolinate + NADP(+) + H2O = (2S,4S)-4-hydroxy-2,3,4,5-tetrahydrodipicolinate + NADPH + H(+). Its pathway is amino-acid biosynthesis; L-lysine biosynthesis via DAP pathway; (S)-tetrahydrodipicolinate from L-aspartate: step 4/4. In terms of biological role, catalyzes the conversion of 4-hydroxy-tetrahydrodipicolinate (HTPA) to tetrahydrodipicolinate. This is 4-hydroxy-tetrahydrodipicolinate reductase from Methanococcus vannielii (strain ATCC 35089 / DSM 1224 / JCM 13029 / OCM 148 / SB).